Here is a 571-residue protein sequence, read N- to C-terminus: Glutamine--tRNA ligase (571 aa).

A 'HIGH' region motif is present at residues 35–45; that stretch reads PEPNGYLHIGH. Residues 36–38 and 42–48 each bind ATP; these read EPN and HIGHAKS. L-glutamine-binding residues include aspartate 68 and tyrosine 213. Residues threonine 232, 262–263, and 270–272 each bind ATP; these read RL and LSK. The 'KMSKS' region motif lies at 269–273; it reads ILSKR.

Belongs to the class-I aminoacyl-tRNA synthetase family. In terms of assembly, monomer.

It is found in the cytoplasm. It catalyses the reaction tRNA(Gln) + L-glutamine + ATP = L-glutaminyl-tRNA(Gln) + AMP + diphosphate. In Buchnera aphidicola subsp. Acyrthosiphon pisum (strain Tuc7), this protein is Glutamine--tRNA ligase.